Here is a 56-residue protein sequence, read N- to C-terminus: MAKGSTIKIGLKCSECGDINYSTTKNAKTNTEKLELKKFSPRLNKHTIHKEVKLKS.

Belongs to the bacterial ribosomal protein bL33 family.

This is Large ribosomal subunit protein bL33 from Helicobacter hepaticus (strain ATCC 51449 / 3B1).